Reading from the N-terminus, the 166-residue chain is Probable chemoreceptor glutamine deamidase CheD (166 aa).

This sequence belongs to the CheD family.

It catalyses the reaction L-glutaminyl-[protein] + H2O = L-glutamyl-[protein] + NH4(+). Its function is as follows. Probably deamidates glutamine residues to glutamate on methyl-accepting chemotaxis receptors (MCPs), playing an important role in chemotaxis. This is Probable chemoreceptor glutamine deamidase CheD from Oceanobacillus iheyensis (strain DSM 14371 / CIP 107618 / JCM 11309 / KCTC 3954 / HTE831).